The chain runs to 128 residues: Organic solute transporter subunit beta (128 aa).

Residues 1–30 are Extracellular-facing; that stretch reads MDHSAEKAAANAEVPQELLEEMLWYFRAED. The chain crosses the membrane as a helical span at residues 31-53; sequence AAPWNYSILVLAVLVVMTSMFLL. Residues 54 to 128 are Cytoplasmic-facing; sequence RRSILANRNR…FLPDPQETES (75 aa). Disordered regions lie at residues 61 to 80 and 101 to 128; these read RNRK…HLDD and PDLA…ETES. 2 stretches are compositionally biased toward basic and acidic residues: residues 66–80 and 101–115; these read QPQD…HLDD and PDLA…EKDS. Ser-116 bears the Phosphoserine mark.

Belongs to the OST-beta family. In terms of assembly, interacts with SLC51A. The Ost-alpha/Ost-beta complex is a heterodimer composed of alpha (SLC51A) and beta (SLC51B) subunit; induces the transport of SLC51A from the endoplasmic reticulum to the plasma membrane. In terms of tissue distribution, present at high level in ileum. In ileum, it is restricted to the apical domain on the mature villus enterocytes with little detectable expression in the goblet cells or crypt enterocytes (at protein level). Expressed in kidney but not in heart, brain, liver, spleen, embryo, lung, thymus, ovary nor testis.

The protein resides in the cell membrane. It catalyses the reaction taurocholate(out) = taurocholate(in). The enzyme catalyses tauroursodeoxycholate(out) = tauroursodeoxycholate(in). It carries out the reaction glycoursodeoxycholate(out) = glycoursodeoxycholate(in). The catalysed reaction is glycocholate(out) = glycocholate(in). It catalyses the reaction taurochenodeoxycholate(out) = taurochenodeoxycholate(in). The enzyme catalyses glycochenodeoxycholate(out) = glycochenodeoxycholate(in). It carries out the reaction taurodeoxycholate(out) = taurodeoxycholate(in). The catalysed reaction is glycodeoxycholate(out) = glycodeoxycholate(in). It catalyses the reaction prostaglandin E2(out) = prostaglandin E2(in). The enzyme catalyses estrone 3-sulfate(out) = estrone 3-sulfate(in). It carries out the reaction dehydroepiandrosterone 3-sulfate(out) = dehydroepiandrosterone 3-sulfate(in). Essential component of the Ost-alpha/Ost-beta complex, a heterodimer that acts as the intestinal basolateral transporter responsible for bile acid export from enterocytes into portal blood. The Ost-alpha/Ost-beta complex efficiently transports the major species of bile acids (taurocholate). Taurine conjugates are transported more efficiently across the basolateral membrane than glycine-conjugated bile acids. Can also transport steroids such as estrone 3-sulfate and dehydroepiandrosterone 3-sulfate, therefore playing a role in the enterohepatic circulation of sterols. Able to transport eicosanoids such as prostaglandin E2. Modulates SLC51A glycosylation, membrane trafficking and stability activities. The chain is Organic solute transporter subunit beta (Slc51b) from Mus musculus (Mouse).